The sequence spans 195 residues: Elongation factor P (195 aa).

This sequence belongs to the elongation factor P family.

The protein resides in the cytoplasm. It participates in protein biosynthesis; polypeptide chain elongation. Involved in peptide bond synthesis. Stimulates efficient translation and peptide-bond synthesis on native or reconstituted 70S ribosomes in vitro. Probably functions indirectly by altering the affinity of the ribosome for aminoacyl-tRNA, thus increasing their reactivity as acceptors for peptidyl transferase. The sequence is that of Elongation factor P from Rhodopirellula baltica (strain DSM 10527 / NCIMB 13988 / SH1).